The following is a 254-amino-acid chain: Nickel import ATP-binding protein NikD (254 aa).

One can recognise an ABC transporter domain in the interval 2-241 (PQQIELRNIA…PKHAVTRSLV (240 aa)). ATP is bound at residue 36–43 (GGSGSGKS).

Belongs to the ABC transporter superfamily. Nickel importer (TC 3.A.1.5.3) family. In terms of assembly, the complex is composed of two ATP-binding proteins (NikD and NikE), two transmembrane proteins (NikB and NikC) and a solute-binding protein (NikA).

It localises to the cell inner membrane. It carries out the reaction Ni(2+)(out) + ATP + H2O = Ni(2+)(in) + ADP + phosphate + H(+). Its function is as follows. Part of the ABC transporter complex NikABCDE involved in nickel import. Responsible for energy coupling to the transport system. The chain is Nickel import ATP-binding protein NikD from Escherichia coli O157:H7.